We begin with the raw amino-acid sequence, 82 residues long: Small ribosomal subunit protein bS20 (82 aa).

Belongs to the bacterial ribosomal protein bS20 family.

Functionally, binds directly to 16S ribosomal RNA. This chain is Small ribosomal subunit protein bS20, found in Streptococcus pyogenes serotype M12 (strain MGAS2096).